The primary structure comprises 419 residues: Putative competence-damage inducible protein (419 aa).

Belongs to the CinA family.

The polypeptide is Putative competence-damage inducible protein (Streptococcus agalactiae serotype Ia (strain ATCC 27591 / A909 / CDC SS700)).